Here is a 314-residue protein sequence, read N- to C-terminus: Zinc transporter ZIP3 (314 aa).

Topologically, residues 1–3 (MVK) are extracellular. A helical transmembrane segment spans residues 4–24 (LLVAKILCMVGMFFFMLLGSL). At 25–42 (LPVKIIEMDFEKAHRSKK) the chain is on the cytoplasmic side. Residues 43–63 (ILSLCNTFGGGVFLATCFNAL) traverse the membrane as a helical segment. At 64 to 85 (LPAVREKLKEVLTLAHISTDYP) the chain is on the extracellular side. The helical transmembrane segment at 86–106 (LAETIMLLGFFMTVFLEQLVL) threads the bilayer. Over 107–169 (TFRKERPAFI…QELSRSSPLR (63 aa)) the chain is Cytoplasmic. 2 positions are modified to phosphoserine: serine 125 and serine 129. The chain crosses the membrane as a helical span at residues 170–190 (LLSLVFALSAHSVFEGLALGL). Over 191–196 (QEEGEK) the chain is Extracellular. The chain crosses the membrane as a helical span at residues 197–217 (VVSLFVGVAIHETLVAVALGI). At 218 to 229 (NMARSAMALRDA) the chain is on the cytoplasmic side. A helical transmembrane segment spans residues 230–250 (AKLAVTVSAMIPLGISLGLGI). The Extracellular portion of the chain corresponds to 251 to 262 (DSAQGMPSSVAS). The helical transmembrane segment at 263–283 (VLLQGLAGGTFLFVTFFEILA) threads the bilayer. The Cytoplasmic portion of the chain corresponds to 284–292 (KELEEKSDR). Residues 293 to 313 (LLKVLFLVLGYTVLAGMVFIK) form a helical membrane-spanning segment. Tryptophan 314 is a topological domain (extracellular).

Belongs to the ZIP transporter (TC 2.A.5) family.

It is found in the cell membrane. Its subcellular location is the apical cell membrane. It carries out the reaction Zn(2+)(in) = Zn(2+)(out). In terms of biological role, transporter for the divalent cation Zn(2+). Mediates the influx of Zn(2+) into cells from extracellular space. Controls Zn(2+) accumulation into dentate gyrus granule cells in the hippocampus. Mediates Zn(2+) reuptake from the secreted milk within the alveolar lumen. The polypeptide is Zinc transporter ZIP3 (SLC39A3) (Bos taurus (Bovine)).